A 317-amino-acid polypeptide reads, in one-letter code: Zinc transporter ZIP3 (317 aa).

Topologically, residues 1-3 (MTK) are extracellular. Residues 4–24 (LLVAKVLCMVGVFFFMLLGSL) form a helical membrane-spanning segment. The Cytoplasmic segment spans residues 25–42 (LPVKVIEADLEKAHRSKK). The chain crosses the membrane as a helical span at residues 43–63 (VLSLCNTFGGGVFLATCFNAL). The Extracellular portion of the chain corresponds to 64-85 (LPAVRDKLQQVLSLGHISTDYP). The chain crosses the membrane as a helical span at residues 86–106 (LAETLMMVGFFLTVFVEQLVL). Residues 107 to 172 (TFRRERPPFI…RELGRPGPLR (66 aa)) lie on the Cytoplasmic side of the membrane. Residues serine 125 and serine 129 each carry the phosphoserine modification. The chain crosses the membrane as a helical span at residues 173 to 193 (LLSLVFALSAHSVFEGLALGL). Over 194-199 (QEEGER) the chain is Extracellular. The chain crosses the membrane as a helical span at residues 200 to 220 (VVSLFVGVAIHETLVAVALGI). At 221–232 (SMARSAVPLRDA) the chain is on the cytoplasmic side. The helical transmembrane segment at 233–253 (AKLAVTVSAMIPVGIGLGLGI) threads the bilayer. Residues 254 to 265 (ESARSVASSVAS) are Extracellular-facing. The chain crosses the membrane as a helical span at residues 266-286 (ALLQGLAGGTFLFVTFLEILA). Residues 287 to 294 (KELEERSE) are Cytoplasmic-facing. Residues 295–315 (QLLKVLFLVLGYAVLAGMVFL) traverse the membrane as a helical segment. At 316-317 (KW) the chain is on the extracellular side.

It belongs to the ZIP transporter (TC 2.A.5) family. As to expression, highly expressed in the testes. Highly expressed in dentate gyrus granule cells of the hippocampus. Expressed in the mammary gland.

The protein resides in the cell membrane. It is found in the apical cell membrane. It carries out the reaction Zn(2+)(in) = Zn(2+)(out). In terms of biological role, transporter for the divalent cation Zn(2+). Mediates the influx of Zn(2+) into cells from extracellular space. Controls Zn(2+) accumulation into dentate gyrus granule cells in the hippocampus. Mediates Zn(2+) reuptake from the secreted milk within the alveolar lumen. The protein is Zinc transporter ZIP3 (Slc39a3) of Mus musculus (Mouse).